We begin with the raw amino-acid sequence, 235 residues long: High affinity immunoglobulin epsilon receptor subunit beta (235 aa).

Residues 1–23 (MDTENRSRADLALPNPQESSSAP) form a disordered region. The Cytoplasmic segment spans residues 1–51 (MDTENRSRADLALPNPQESSSAPDIELLEASPAKAAPPKQTWRTFLKKELE). A helical membrane pass occupies residues 52–71 (FLGATQILVGLICLCFGTIV). The Extracellular portion of the chain corresponds to 72 to 89 (CSVLYVSDFDEEVLLLYK). A helical transmembrane segment spans residues 90–109 (LGYPFWGAVLFVLSGFLSII). At 110–122 (SERKNTLYLVRGS) the chain is on the cytoplasmic side. Residues 123–142 (LGANIVSSIAAGTGIAMLIL) traverse the membrane as a helical segment. Topologically, residues 143-171 (NLTNNFAYMNNCKNVTEDDGCFVASFTTE) are extracellular. The helical transmembrane segment at 172–191 (LVLMMLFLTILAFCSAVLFT) threads the bilayer. Residues 192–235 (IYRIGQELESKKVPDDRLYEELNVYSPIYSELEDKGETSSPVDS) are Cytoplasmic-facing. Tyrosine 210 and tyrosine 216 each carry phosphotyrosine. Serine 217 bears the Phosphoserine mark. At tyrosine 220 the chain carries Phosphotyrosine.

It belongs to the MS4A family. In terms of assembly, tetramer of an alpha chain, a beta chain, and two disulfide linked gamma chains. Binds LILRB1. Interacts with FGR. Interacts with FGR and FES/FPS. Interacts with LYN. In terms of processing, phosphorylated on tyrosine residues by LYN.

It is found in the membrane. High affinity receptor that binds to the Fc region of immunoglobulins epsilon. Aggregation of FCER1 by multivalent antigens is required for the full mast cell response, including the release of preformed mediators (such as histamine) by degranulation and de novo production of lipid mediators and cytokines. Also mediates the secretion of important lymphokines. Binding of allergen to receptor-bound IgE leads to cell activation and the release of mediators responsible for the manifestations of allergy. The chain is High affinity immunoglobulin epsilon receptor subunit beta (Ms4a2) from Mus musculus (Mouse).